A 354-amino-acid polypeptide reads, in one-letter code: Heat-inducible transcription repressor HrcA (354 aa).

Belongs to the HrcA family.

Its function is as follows. Negative regulator of class I heat shock genes (grpE-dnaK-dnaJ and groELS operons). Prevents heat-shock induction of these operons. The sequence is that of Heat-inducible transcription repressor HrcA from Herpetosiphon aurantiacus (strain ATCC 23779 / DSM 785 / 114-95).